The following is a 100-amino-acid chain: Large ribosomal subunit protein uL23 (100 aa).

Belongs to the universal ribosomal protein uL23 family. In terms of assembly, part of the 50S ribosomal subunit. Contacts protein L29, and trigger factor when it is bound to the ribosome.

One of the early assembly proteins it binds 23S rRNA. One of the proteins that surrounds the polypeptide exit tunnel on the outside of the ribosome. Forms the main docking site for trigger factor binding to the ribosome. The sequence is that of Large ribosomal subunit protein uL23 from Sodalis glossinidius (strain morsitans).